An 85-amino-acid polypeptide reads, in one-letter code: Large ribosomal subunit protein bL27 (85 aa).

Residues 1 to 20 (MATKKAGGSTRNGRDSEAKR) form a disordered region.

The protein belongs to the bacterial ribosomal protein bL27 family.

In Histophilus somni (strain 129Pt) (Haemophilus somnus), this protein is Large ribosomal subunit protein bL27.